The sequence spans 246 residues: Bis(5'-nucleosyl)-tetraphosphatase PrpE [asymmetrical] (246 aa).

Belongs to the PrpE family. Requires Ni(2+) as cofactor.

The enzyme catalyses P(1),P(4)-bis(5'-guanosyl) tetraphosphate + H2O = GMP + GTP + 2 H(+). In terms of biological role, asymmetrically hydrolyzes Ap4p to yield AMP and ATP. This chain is Bis(5'-nucleosyl)-tetraphosphatase PrpE [asymmetrical], found in Bacillus cereus (strain B4264).